The chain runs to 884 residues: DNA primase (884 aa).

A CHC2-type zinc finger spans residues 825–864 (CISSNHRNKTQSVRIFIVLYTNKKDEVTITLMSQCFAHKC).

The protein belongs to the herpesviridae DNA primase family. Associates with the helicase and the primase-associated factor to form the helicase-primase factor.

Its subcellular location is the host nucleus. Functionally, essential component of the helicase/primase complex. Unwinds the DNA at the replication forks and generates single-stranded DNA for both leading and lagging strand synthesis. The primase initiates primer synthesis and thereby produces large amount of short RNA primers on the lagging strand that the polymerase elongates using dNTPs. The polypeptide is DNA primase (56) (Equine herpesvirus 2 (strain 86/87) (EHV-2)).